The primary structure comprises 215 residues: Hibernation-associated plasma protein HP-25 (215 aa).

The N-terminal stretch at 1-28 (MPAQRGGALSMGAAGFWILVLSITSALA) is a signal peptide. A disordered region spans residues 29-96 (DSNNQGNSEP…RPKSAFAVKL (68 aa)). Composition is skewed to pro residues over residues 39–51 (CGPPGPPGPPGIP) and 60–77 (LGPPGPPGVPGIPGPQGP). The region spanning 40 to 81 (GPPGPPGPPGIPGFPGAPGALGPPGPPGVPGIPGPQGPPGDV) is the Collagen-like domain. The region spanning 85 to 215 (SSRPKSAFAV…VFFGYLLYGK (131 aa)) is the C1q domain. N167 carries N-linked (GlcNAc...) asparagine glycosylation.

As to expression, plasma; synthesized in the liver.

The protein localises to the secreted. Its function is as follows. Plasma proteins HP-20, HP-25, HP-27 and HP-55 form a 140 kDa complex via disulfide bonds in the plasma and are hibernation specific. In Tamias sibiricus (Siberian chipmunk), this protein is Hibernation-associated plasma protein HP-25.